Consider the following 21-residue polypeptide: Nigrocin-2JDa (21 aa).

Cysteine 15 and cysteine 21 are disulfide-bonded.

As to expression, expressed by the skin glands.

Its subcellular location is the secreted. Its function is as follows. Has antibacterial activity against E.coli ATCC 25992 (MIC=16 uM), E.coli CIB 84492 (MIC=16 uM), S.aureus ATCC 25923 (MIC=16 uM) and S.aureus CIB 85462 (MIC=8 uM). Has antifungal activity against C.albicans (MIC=63 uM). Has hemolytic activity against rabbit erythrocytes. The chain is Nigrocin-2JDa from Odorrana jingdongensis (Jingdong frog).